The primary structure comprises 77 residues: MDFKRKLSEVDADAAEDVKMDMGATIIPQRERATSVIEDFLHQENSELKKSLKNLEMENEKLKNILKTDYNVNYIRK.

Residues 38-71 are a coiled coil; that stretch reads EDFLHQENSELKKSLKNLEMENEKLKNILKTDYN.

Its function is as follows. Plays an important role in survival in host blood through increasing tolerance to stresses such as heat, salt, or cycloheximide, which is essential for virulence. The polypeptide is Blood-induced peptide 1 (Candida albicans (strain SC5314 / ATCC MYA-2876) (Yeast)).